Here is a 345-residue protein sequence, read N- to C-terminus: Neurotrimin (345 aa).

The N-terminal stretch at 1–30 (MGVCGSLFLPWKCLVVVSLRLLFLVPTGVP) is a signal peptide. Ig-like C2-type domains are found at residues 39–126 (PKAM…PKTS), 136–218 (PKIV…VKVT), and 222–309 (PPYI…ASIT). N-linked (GlcNAc...) asparagine glycosylation is found at asparagine 44, asparagine 70, and asparagine 152. The cysteines at positions 57 and 115 are disulfide-linked. 2 cysteine pairs are disulfide-bonded: cysteine 157–cysteine 201 and cysteine 243–cysteine 295. N-linked (GlcNAc...) asparagine glycosylation is found at asparagine 284, asparagine 292, asparagine 305, and asparagine 321. A lipid anchor (GPI-anchor amidated asparagine) is attached at asparagine 321. Positions 322-345 (GTSSRRAGCLWLLPLLVLHLLLKF) are cleaved as a propeptide — removed in mature form.

It belongs to the immunoglobulin superfamily. IgLON family.

It is found in the cell membrane. Neural cell adhesion molecule. The sequence is that of Neurotrimin (NTM) from Bos taurus (Bovine).